A 187-amino-acid polypeptide reads, in one-letter code: Guanylate kinase (187 aa).

Residue serine 2 is modified to N-acetylserine. The region spanning 2–184 is the Guanylate kinase-like domain; it reads SRPIVISGPS…AYKELKDFIF (183 aa). Position 9–16 (9–16) interacts with ATP; the sequence is GPSGTGKS. GMP is bound by residues serine 35, 39–42, tyrosine 51, glutamate 70, 79–81, and aspartate 101; these read RTPR and YGS. Serine 149 carries the phosphoserine modification. Tyrosine 157 bears the Phosphotyrosine mark.

It belongs to the guanylate kinase family. As to quaternary structure, monomer.

The enzyme catalyses GMP + ATP = GDP + ADP. Its function is as follows. Catalyzes the reversible transfer of the terminal phosphoryl group of ATP to the acceptor molecule GMP. Essential for recycling GMP and indirectly, cGMP. This Saccharomyces cerevisiae (strain ATCC 204508 / S288c) (Baker's yeast) protein is Guanylate kinase (GUK1).